Here is a 478-residue protein sequence, read N- to C-terminus: Glucose-6-phosphate 1-dehydrogenase (478 aa).

NADP(+) contacts are provided by residues arginine 48, 86 to 87, and lysine 142; that span reads DF. 4 residues coordinate substrate: histidine 172, lysine 176, glutamate 210, and aspartate 229. Histidine 234 functions as the Proton acceptor in the catalytic mechanism. 2 residues coordinate substrate: lysine 334 and lysine 339.

This sequence belongs to the glucose-6-phosphate dehydrogenase family.

It carries out the reaction D-glucose 6-phosphate + NADP(+) = 6-phospho-D-glucono-1,5-lactone + NADPH + H(+). It functions in the pathway carbohydrate degradation; pentose phosphate pathway; D-ribulose 5-phosphate from D-glucose 6-phosphate (oxidative stage): step 1/3. Functionally, catalyzes the oxidation of glucose 6-phosphate to 6-phosphogluconolactone. The polypeptide is Glucose-6-phosphate 1-dehydrogenase (Borreliella burgdorferi (strain ATCC 35210 / DSM 4680 / CIP 102532 / B31) (Borrelia burgdorferi)).